Reading from the N-terminus, the 456-residue chain is Tyrosine phenol-lyase (456 aa).

N6-(pyridoxal phosphate)lysine is present on Lys257.

Belongs to the beta-eliminating lyase family. As to quaternary structure, homotetramer. Pyridoxal 5'-phosphate is required as a cofactor.

It catalyses the reaction L-tyrosine + H2O = phenol + pyruvate + NH4(+). The protein is Tyrosine phenol-lyase (tpl) of Citrobacter freundii.